The sequence spans 552 residues: MSKNYLLAVLALLLSGPVVAADAIAGTVERQPVNMEAIVMFLIFVAMTLGITYWASRRTRSRSDYYTAGGNITGFQNGLAMAGDFMSAASFLGISALVYTSGFDGLIYSLGFLVGWPIILFLIAERLRNLGRYTFADVASYRLKQMPIRTLSACGSLVVVALYLIAQMVGAGKLIQLLFGLDYHVAVVLVGILMVMYVLFGGMLATTWVQIIKAVLLLFGASFMAIMVMKNVGFSFDTLFSEAMKIHPKGVAIMRPGGLVNDPISALSLGLGLMFGTAGLPHILMRFFTVSDAREARKSVFYATGLMGYFYFLTFIIGFGAILLVGANPAFKDATGALLGGNNMAAVHLADAVGGSLFLGFISAVAFATILAVVAGLTLAGASAVSHDLYASVVRKGQASEREELRVSKITVVALGVVAILLGILFEKQNIAFMVGLAFSIAASCNFPIILLSMYWSRLTTRGAMTGGWLGLLTAVILMILGPTIWVQVLGHARPIFPYEYPALFSMLVAFIGTWLFSVTDNSTQGAEERLRFRAQFVRSQTGVGIEGGKGH.

The next 14 helical transmembrane spans lie at 6–26 (LLAV…AIAG), 35–55 (MEAI…TYWA), 78–98 (GLAM…SALV), 103–123 (FDGL…LFLI), 151–171 (LSAC…MVGA), 185–205 (VAVV…GMLA), 208–228 (WVQI…AIMV), 264–284 (ISAL…PHIL), 305–325 (GLMG…ILLV), 357–377 (LFLG…VAGL), 407–427 (VSKI…ILFE), 431–451 (IAFM…PIIL), 467–487 (GGWL…TIWV), and 496–516 (IFPY…GTWL).

It belongs to the sodium:solute symporter (SSF) (TC 2.A.21) family.

Its subcellular location is the cell inner membrane. In terms of biological role, transports acetate. This chain is Cation/acetate symporter ActP, found in Erwinia tasmaniensis (strain DSM 17950 / CFBP 7177 / CIP 109463 / NCPPB 4357 / Et1/99).